The sequence spans 363 residues: Protein U2 (363 aa).

Positions 1 to 18 are cleaved as a signal peptide; the sequence is MFCRSPFLGISSWSLASA.

The protein is Protein U2 (U2) of Homo sapiens (Human).